Consider the following 127-residue polypeptide: UPF0325 protein VV1_1856 (127 aa).

Belongs to the UPF0325 family.

In Vibrio vulnificus (strain CMCP6), this protein is UPF0325 protein VV1_1856.